The primary structure comprises 121 residues: Large ribosomal subunit protein bL21 (121 aa).

This sequence belongs to the bacterial ribosomal protein bL21 family. In terms of assembly, part of the 50S ribosomal subunit. Contacts protein L20.

This protein binds to 23S rRNA in the presence of protein L20. The sequence is that of Large ribosomal subunit protein bL21 from Synechococcus sp. (strain CC9605).